The primary structure comprises 427 residues: METLCLRASFWLALVGCVISDNPERYSTNLSNHVDDFTTFRGTELSFLVTTHQPTNLVLPSNGSMHNYCPQQTKITSAFKYINTVISCTIFIVGMVGNATLLRIIYQNKCMRNGPNALIASLALGDLIYVVIDLPINVFKLLAGRWPFDHNDFGVFLCKLFPFLQKSSVGITVLNLCALSVDRYRAVASWSRVQGIGIPLVTAIEIVSIWILSFILAIPEAIGFVMVPFEYRGEQHKTCMLNATSKFMEFYQDVKDWWLFGFYFCMPLVCTAIFYTLMTCEMLNRRNGSLRIALSEHLKQRREVAKTVFCLVVIFALCWFPLHLSRILKKTVYNEMDKNRCELLSFLLLMDYIGINLATMNSCINPIALYFVSKKFKNCFQSCLCCCCYQSKSLMTSVPMNGTSIQWKNHDQNNHNTDRSSHKDSMN.

The first 20 residues, 1–20 (METLCLRASFWLALVGCVIS), serve as a signal peptide directing secretion. The Extracellular segment spans residues 21-80 (DNPERYSTNLSNHVDDFTTFRGTELSFLVTTHQPTNLVLPSNGSMHNYCPQQTKITSAFK). Residues N29 and N62 are each glycosylated (N-linked (GlcNAc...) asparagine). Residues 81 to 102 (YINTVISCTIFIVGMVGNATLL) form a helical membrane-spanning segment. The Cytoplasmic portion of the chain corresponds to 103–112 (RIIYQNKCMR). The chain crosses the membrane as a helical span at residues 113-132 (NGPNALIASLALGDLIYVVI). Residues 133 to 159 (DLPINVFKLLAGRWPFDHNDFGVFLCK) lie on the Extracellular side of the membrane. Cysteines 158 and 239 form a disulfide. The chain crosses the membrane as a helical span at residues 160–181 (LFPFLQKSSVGITVLNLCALSV). Topologically, residues 182-205 (DRYRAVASWSRVQGIGIPLVTAIE) are cytoplasmic. Residues 206–229 (IVSIWILSFILAIPEAIGFVMVPF) form a helical membrane-spanning segment. Residues 230-256 (EYRGEQHKTCMLNATSKFMEFYQDVKD) lie on the Extracellular side of the membrane. A helical membrane pass occupies residues 257-278 (WWLFGFYFCMPLVCTAIFYTLM). At 279–306 (TCEMLNRRNGSLRIALSEHLKQRREVAK) the chain is on the cytoplasmic side. The helical transmembrane segment at 307-328 (TVFCLVVIFALCWFPLHLSRIL) threads the bilayer. The Extracellular segment spans residues 329–347 (KKTVYNEMDKNRCELLSFL). A helical membrane pass occupies residues 348 to 372 (LLMDYIGINLATMNSCINPIALYFV). At 373–427 (SKKFKNCFQSCLCCCCYQSKSLMTSVPMNGTSIQWKNHDQNNHNTDRSSHKDSMN) the chain is on the cytoplasmic side. The segment at 406–427 (QWKNHDQNNHNTDRSSHKDSMN) is disordered. Residues 408 to 427 (KNHDQNNHNTDRSSHKDSMN) are compositionally biased toward basic and acidic residues. Position 425 is a phosphoserine (S425).

Belongs to the G-protein coupled receptor 1 family. Endothelin receptor subfamily. EDNRA sub-subfamily. In terms of assembly, interacts with HDAC7 and KAT5. In terms of tissue distribution, isoform 1, isoform 3 and isoform 4 are expressed in a variety of tissues, with highest levels in the aorta and cerebellum, followed by lung, atrium and cerebral cortex, lower levels in the placenta, kidney, adrenal gland, duodenum, colon, ventricle and liver but no expression in umbilical vein endothelial cells. Within the placenta, isoform 1, isoform 2, isoform 3 and isoform 4 are expressed in the villi and stem villi vessels.

The protein resides in the cell membrane. In terms of biological role, receptor for endothelin-1. Mediates its action by association with G proteins that activate a phosphatidylinositol-calcium second messenger system. The rank order of binding affinities for ET-A is: ET1 &gt; ET2 &gt;&gt; ET3. This Homo sapiens (Human) protein is Endothelin-1 receptor.